The chain runs to 375 residues: Secreted LysM effector Vd4LysM (375 aa).

The signal sequence occupies residues 1–24 (MPSVTISSTMLAGLLLMLVPASSA). Residues 57-104 (SWWWDNEGQIPCANMPAEWGITMQDFLRWNPSITSSCGNFLNGRSYCV) enclose the LysM 1 domain. Positions 108-139 (GEEPPVPGTPTTTTAPATTTKPSNGITTPQPI) are disordered. Over residues 116-129 (TPTTTTAPATTTKP) the composition is skewed to low complexity. Residues 149-195 (KFHYISEGDRCQDILSYQKITLADFFKWNPAVKSDCSGLWSKTNACV) enclose the LysM 2 domain. Residues 206-217 (TTTTKPATPTTP) are compositionally biased toward low complexity. Residues 206 to 225 (TTTTKPATPTTPSNGITTPQ) are disordered. Residues 237 to 283 (KFHYISEGDRCQDILSYQKITQADFFKWNPAVKSDCSGLWSKTHACV) enclose the LysM 3 domain. A disordered region spans residues 287–317 (GGQAPPPTPTTTKPTTTKPPGNGVTTPTPTQ). Low complexity predominate over residues 296–317 (TTTKPTTTKPPGNGVTTPTPTQ). In terms of domain architecture, LysM 4 spans 326 to 372 (KFHFVSPGNTCQQIVSYQKITMANFVKWNSGAGSGCNNLWGNTHACV).

The protein belongs to the secreted LysM effector family.

In terms of biological role, might have a role in sequestration of chitin oligosaccharides (breakdown products of fungal cell walls that are released during invasion and act as triggers of host immunity) to dampen host defense. Does not play an important role during host colonization. The sequence is that of Secreted LysM effector Vd4LysM from Verticillium dahliae (strain VdLs.17 / ATCC MYA-4575 / FGSC 10137) (Verticillium wilt).